We begin with the raw amino-acid sequence, 150 residues long: CCAAT/enhancer-binding protein gamma (150 aa).

A Glycyl lysine isopeptide (Lys-Gly) (interchain with G-Cter in SUMO2) cross-link involves residue K3. Positions 27–94 (GLQQVPQLVP…QKAQDTLQRV (68 aa)) are disordered. Over residues 28-37 (LQQVPQLVPA) the composition is skewed to low complexity. Residues 56–72 (SPMDRNSDEYRQRRERN) are compositionally biased toward basic and acidic residues. Positions 62–125 (SDEYRQRRER…SVLKDLFLEH (64 aa)) constitute a bZIP domain. The tract at residues 66–93 (RQRRERNNMAVKKSRLKSKQKAQDTLQR) is basic motif. A leucine-zipper region spans residues 97-118 (LKEENERLEAKIKLLTKELSVL).

It belongs to the bZIP family. C/EBP subfamily. In terms of assembly, binds DNA as a dimer and can form stable heterodimers with CEBPA and CEBPB. Interacts with ZNF638; this interaction increases transcriptional activation.

The protein localises to the nucleus. Transcription factor that binds to the promoter and the enhancer regions of target genes. Binds to the enhancer element PRE-I (positive regulatory element-I) of the IL-4 gene. Binds to the promoter and the enhancer of the immunoglobulin heavy chain. Binds to GPE1, a cis-acting element in the G-CSF gene promoter. The protein is CCAAT/enhancer-binding protein gamma (CEBPG) of Homo sapiens (Human).